A 227-amino-acid polypeptide reads, in one-letter code: Guanylate kinase (227 aa).

The 179-residue stretch at 21 to 199 folds into the Guanylate kinase-like domain; sequence GNLFMVVAPS…ALAELECIVA (179 aa). 28–35 contacts ATP; sequence APSGAGKS.

The protein belongs to the guanylate kinase family.

It localises to the cytoplasm. The catalysed reaction is GMP + ATP = GDP + ADP. Its function is as follows. Essential for recycling GMP and indirectly, cGMP. This Burkholderia mallei (strain ATCC 23344) protein is Guanylate kinase.